A 150-amino-acid polypeptide reads, in one-letter code: Head completion nuclease (150 aa).

Catalysis depends on residues glutamate 29, aspartate 68, and lysine 84.

The protein belongs to the Caudovirales head completion nuclease family.

During phage morphogenesis, plays an essential role in the head-tail joining step. The associated nuclease activity is essential for morphogenesis, possibly by cleaving packaged DNA to enable the joining of heads to tails. Displays both exo- and endonuclease activity. This chain is Head completion nuclease (50), found in Enterobacteria phage T4 (Bacteriophage T4).